Consider the following 564-residue polypeptide: Mitochondrial distribution and morphology protein 34 (564 aa).

Residues M1–E208 enclose the SMP-LTD domain. 5 disordered regions span residues E208–N240, S336–T397, Q404–D423, R434–Q517, and I532–H564. Residues S209 to P219 are compositionally biased toward polar residues. Basic residues predominate over residues S351–R365. Positions V366–D376 are enriched in basic and acidic residues. Positions S380–E390 are enriched in low complexity. 2 stretches are compositionally biased toward polar residues: residues G438–S462 and P477–I503.

The protein belongs to the MDM34 family. As to quaternary structure, component of the ER-mitochondria encounter structure (ERMES) or MDM complex, composed of mmm1, mdm10, mdm12 and mdm34.

Its subcellular location is the mitochondrion outer membrane. In terms of biological role, component of the ERMES/MDM complex, which serves as a molecular tether to connect the endoplasmic reticulum (ER) and mitochondria. Components of this complex are involved in the control of mitochondrial shape and protein biogenesis, and function in nonvesicular lipid trafficking between the ER and mitochondria. Mdm34 is required for the interaction of the ER-resident membrane protein mmm1 and the outer mitochondrial membrane-resident beta-barrel protein mdm10. This is Mitochondrial distribution and morphology protein 34 from Talaromyces stipitatus (strain ATCC 10500 / CBS 375.48 / QM 6759 / NRRL 1006) (Penicillium stipitatum).